The chain runs to 88 residues: Small ribosomal subunit protein uS17 (88 aa).

This sequence belongs to the universal ribosomal protein uS17 family. In terms of assembly, part of the 30S ribosomal subunit.

One of the primary rRNA binding proteins, it binds specifically to the 5'-end of 16S ribosomal RNA. The sequence is that of Small ribosomal subunit protein uS17 from Azotobacter vinelandii (strain DJ / ATCC BAA-1303).